The sequence spans 944 residues: Leucine--tRNA ligase (944 aa).

Residues 40 to 51 (PYPSGAGLHVGH) carry the 'HIGH' region motif. The short motif at 718 to 722 (KMSKS) is the 'KMSKS' region element. Residue lysine 721 coordinates ATP.

The protein belongs to the class-I aminoacyl-tRNA synthetase family.

The protein localises to the cytoplasm. The catalysed reaction is tRNA(Leu) + L-leucine + ATP = L-leucyl-tRNA(Leu) + AMP + diphosphate. The chain is Leucine--tRNA ligase from Phocaeicola vulgatus (strain ATCC 8482 / DSM 1447 / JCM 5826 / CCUG 4940 / NBRC 14291 / NCTC 11154) (Bacteroides vulgatus).